We begin with the raw amino-acid sequence, 211 residues long: Transcriptional regulator NarO (211 aa).

The HTH bat-type domain maps to 154–205 (LTARQREVLETAHEMGYFEHPREANATEVAAALDINRSTFTEHLSAAQSKLL).

Activates transcription of the denitrifying genes (nitrate reductase narA and nitrite reductase nirK) under anaerobic conditions. The polypeptide is Transcriptional regulator NarO (Haloferax volcanii (strain ATCC 29605 / DSM 3757 / JCM 8879 / NBRC 14742 / NCIMB 2012 / VKM B-1768 / DS2) (Halobacterium volcanii)).